Reading from the N-terminus, the 2387-residue chain is MPSAQHSVGDVPIAVVGLSCRFPGDASTPSKFWDMLKNGKDAYSPTSTRWNSDAFYHPGDGRLNSLPTKGGHFLKEDPYVFDAAFFNITAAEAIALDPKQRIAMEVTYEAFENAGMSLQQISGSQTACYIGSGPSDYRGAVERDFLHNPKYHLLGTGDEMISNRISHFLDIHGPSATVQTACSSSLMATHLACQSLRSGESEMAITGGISLMLTPDFTTHLNNLTFLNPEGLSKAFDESAGGYGRGEGCGIIILKRLADAIQDGDDIRAVIRGTGANSDGFTQGVTMPSFEAQAALIRQVYSSNGLDYSTQYVEAHGTGTKAGDPIETRAIYSTIGKGSPKPRKLFVGSVKPNIGHLESAAGVSGIIKGILSMEHNLIPPNLHFTKANPAIPFDEWNMAVPTKLTPWPVAATKRMSVSGFGMGGTNGHVVLESFDSTRSTNGSGYSGGFSTFEKTRTKKRLFVFSSHDQAGFKRNANALAEHLDTVGSVASSSDFMANLAHTLSGARSSLSWRATCIAENKIELRDYLTTKPGDGASRDATNATRAPRIGFVFTGQGAQWARMGVEMLDRPVFRDSVAQSTHYLQAMGCVWDPVAELKKTQADSRLSQPEISQPICSVLQIALVDELRSWGVTPSKVVGHSSGEIAAAYSIGALSHRDAIAAAYFRGVATVRLRADAPDLKGGMMAVGCSRDEAEELIEQSKLDGTAAVACVNSPSSVTLSGDVDTLEQLRAICDEHKVFVRRLKVEMAYHSRHMNRVSGTYAEFIADLQPIPREYNENEDDDSIQTMLSSVTGQEVAPELLGPYYWVRNLVSPVLFSDAVKEMVAPDEAEGDNTVDLLIEIGPHGALGGPVEQILGHHGVKHITYKSMLTRGRNALETSLELASELFLKGVPIDISQVNSDLNPRRLTDLPPYQWNHSKVFRHETRIQRELVMRQFPSKSIIGAQVPMMDESQHVWRNFLRLSDEPWIRGHKVGSTVLFPAAGLIGMALEAAQQLVEPSKTARSLRLRDISFFAAMALSEDVPTEVIMHLRPHLLATSGSTPAAWWEFTISSCAGIDNLRDNCRGLITIDYAETTSEQMASEDASLEASRIAHYHRVREESSYTYSKEDFYSQFEKIAWNYGEAFRGVEKVYLGDGQATYDVKLVDIGETASKGQLDRPFLIHAGALDSILQGCLGSTYRNGRFDMDKPVLPTFIGQMEISLDIPGDAGYVLPAVCESKRHGFKELSSNIYAFDSAVSKVNLSVVDYRVSELENDSGEQDSQQLEVDPAEITSEVRWNYALEVLEPEEIKKVVLAVAAEDRVVELIRLYLHNNPAATVIELVPDYEALERATMSLLPPGTILPSHIKYAVAATGSKSENQVDIENVIGTPFDLGDLDDTLPTDIAAADLLVIPQSVNNHKDLGVLLTRLTSFGKPDASLVLAVNSSVNVSNSMLESKGFRRVFDLENSVALYKSRQSGHTNGHTNGHTNGTSTRSELFIIEPLATSSRINSFSGALQVTLREHGYPVFVTNWTEISARPAADLEGNTFISLLELEQPLLDALSEPDFYSVRKLLLNSDRLLWITAGDNPSMGVVDGIRRTMRSEVAGLKFQVLHLSSLDTALQCGPALAGRIMTTDTKDDEFQERDGMLQVARIFNSPEGNEGVRRCLEDSVRVERLGEQERALRLTIMKPGLMDTLTFIEDDRMTGPLGATEIEVDVKATGVNFKDIMAAMGLVEVSLIGQEASGIVTATGSTAASRFKPGDRVTLLWEGMHVTKLRIDHRLAVHIPDSMSFEEAAALPMVHTTAYHALVNVAKLRPGQSVLIHAAAGGVGQAALQLATHLGLVAYVTVGSEDKRRLLMEKYNVPEAHIFHSRDTSFAKAIKRVTGGRGVDCVLNSLSGELLRVSWTCLAPFGTFVEIGLRDITNNMRLDMRPFSRSTTFAFINIANFFDPEGLDALGQILSDAFALVHKGVLGTAYPLTVYPVSELETAFRTMQQGKHRGKLVLSFGDNAQAPVLCKARDSLRLSPKSTYLFIGGLGGLGRSLAREFVACGARHIAFISRSGDSSAEAKATVQALTTLGANVKAYRADVSEEAAFLSAMQQCATDLPPIAGVVQMAMLLRDTLFEKISYTDWTQPMRPKIQGTLNLHNYFSATRPLDFFVICSSISGIFGYPGQTQYAAANTFQDALARHRRNQGLKGVAVDLGIMRDVGILAEQGTTGKLADWEAILGIREKPFHALMKSVINSEWKGAVPPPAQLCTGLGTADIMARFGLERPEHFSDPRFGPLNVLSIESSSSLSTDQDTASSPSTRLAAATTLDEAVVIITDALVHKMAEILQMPLSEVDPGRPMYRYGVDSLVALEVRNWITRELQANMALLEILAAEPMRVFAGKIAEKSKLVAGRKG.

The Ketosynthase family 3 (KS3) domain maps to 10-433; the sequence is DVPIAVVGLS…GTNGHVVLES (424 aa). Residues cysteine 182, histidine 316, and histidine 356 each act as for beta-ketoacyl synthase activity in the active site. The tract at residues 551-891 is malonyl-CoA:ACP transacylase (MAT) domain; the sequence is FVFTGQGAQW…ELASELFLKG (341 aa). The active-site For malonyltransferase activity is serine 641. The interval 940-1075 is N-terminal hotdog fold; it reads KSIIGAQVPM…GLITIDYAET (136 aa). Positions 940 to 1259 constitute a PKS/mFAS DH domain; that stretch reads KSIIGAQVPM…VSELENDSGE (320 aa). A dehydratase (DH) domain region spans residues 942–1256; it reads IIGAQVPMMD…DYRVSELEND (315 aa). The Proton acceptor; for dehydratase activity role is filled by histidine 972. Residues 1103–1259 are C-terminal hotdog fold; sequence SYTYSKEDFY…VSELENDSGE (157 aa). The active-site Proton donor; for dehydratase activity is the aspartate 1169. The enoylreductase (ER) domain stretch occupies residues 1673 to 1987; the sequence is GLMDTLTFIE…QGKHRGKLVL (315 aa). The tract at residues 2011-2191 is catalytic ketoreductase (KRc) domain; it reads STYLFIGGLG…VAVDLGIMRD (181 aa). In terms of domain architecture, Carrier spans 2302 to 2379; sequence EAVVIITDAL…VFAGKIAEKS (78 aa). Serine 2339 bears the O-(pantetheine 4'-phosphoryl)serine mark.

It functions in the pathway mycotoxin biosynthesis. Highly reducing polyketide synthase; part of the gene cluster that mediates the biosynthesis of 10,11-dehydrocurvularin, a prevalent fungal phytotoxin with heat shock response and immune-modulatory activities. The highly reducing polyketide synthase curS1 is responsible for biosynthesis up to the tetraketide stage. The non-reducing polyketide synthase curS2 then conducts four additional chain extension cycles, producing the unreduced part of the nascent octaketide from C-1 to C-8 in 10,11-dehydrocurvularin. The polypeptide is Highly reducing polyketide synthase curS1 (Aspergillus terreus).